Consider the following 169-residue polypeptide: Peptide deformylase 1 (169 aa).

Residues Cys-93 and His-135 each contribute to the Fe cation site. Glu-136 is an active-site residue. His-139 serves as a coordination point for Fe cation.

The protein belongs to the polypeptide deformylase family. It depends on Fe(2+) as a cofactor.

The catalysed reaction is N-terminal N-formyl-L-methionyl-[peptide] + H2O = N-terminal L-methionyl-[peptide] + formate. In terms of biological role, removes the formyl group from the N-terminal Met of newly synthesized proteins. Requires at least a dipeptide for an efficient rate of reaction. N-terminal L-methionine is a prerequisite for activity but the enzyme has broad specificity at other positions. The sequence is that of Peptide deformylase 1 from Corynebacterium glutamicum (strain ATCC 13032 / DSM 20300 / JCM 1318 / BCRC 11384 / CCUG 27702 / LMG 3730 / NBRC 12168 / NCIMB 10025 / NRRL B-2784 / 534).